Consider the following 126-residue polypeptide: Large ribosomal subunit protein bL12 (126 aa).

Belongs to the bacterial ribosomal protein bL12 family. In terms of assembly, homodimer. Part of the ribosomal stalk of the 50S ribosomal subunit. Forms a multimeric L10(L12)X complex, where L10 forms an elongated spine to which 2 to 4 L12 dimers bind in a sequential fashion. Binds GTP-bound translation factors.

Forms part of the ribosomal stalk which helps the ribosome interact with GTP-bound translation factors. Is thus essential for accurate translation. The protein is Large ribosomal subunit protein bL12 of Helicobacter hepaticus (strain ATCC 51449 / 3B1).